The sequence spans 214 residues: Nucleoplasmin-2 (214 aa).

The tract at residues Glu-119–Lys-214 is disordered. Residues Thr-127–Leu-155 are compositionally biased toward acidic residues. The interval Glu-129–Asp-152 is acidic tract A2. The Bipartite nuclear localization signal signature appears at Lys-165–Lys-180. A compositionally biased stretch (basic and acidic residues) spans Leu-181–Pro-197. The segment covering Val-198–Lys-214 has biased composition (basic residues).

It belongs to the nucleoplasmin family. Homopentamer, when bound to H2A-H2B dimers only. Homodecamer of two stacked pentamers, when bound to H2A-H2B dimers and H3-H4 tetramers simultaneously.

The protein localises to the nucleus. Functionally, core histones chaperone involved in chromatin reprogramming, specially during fertilization and early embryonic development. Probably involved in sperm DNA decondensation during fertilization. The polypeptide is Nucleoplasmin-2 (NPM2) (Homo sapiens (Human)).